A 243-amino-acid polypeptide reads, in one-letter code: 1-(5-phosphoribosyl)-5-[(5-phosphoribosylamino)methylideneamino] imidazole-4-carboxamide isomerase (243 aa).

The Proton acceptor role is filled by D10. D131 serves as the catalytic Proton donor.

The protein belongs to the HisA/HisF family.

The protein resides in the cytoplasm. The catalysed reaction is 1-(5-phospho-beta-D-ribosyl)-5-[(5-phospho-beta-D-ribosylamino)methylideneamino]imidazole-4-carboxamide = 5-[(5-phospho-1-deoxy-D-ribulos-1-ylimino)methylamino]-1-(5-phospho-beta-D-ribosyl)imidazole-4-carboxamide. It functions in the pathway amino-acid biosynthesis; L-histidine biosynthesis; L-histidine from 5-phospho-alpha-D-ribose 1-diphosphate: step 4/9. The polypeptide is 1-(5-phosphoribosyl)-5-[(5-phosphoribosylamino)methylideneamino] imidazole-4-carboxamide isomerase (Rhizorhabdus wittichii (strain DSM 6014 / CCUG 31198 / JCM 15750 / NBRC 105917 / EY 4224 / RW1) (Sphingomonas wittichii)).